Consider the following 207-residue polypeptide: Uracil phosphoribosyltransferase (207 aa).

5-phospho-alpha-D-ribose 1-diphosphate is bound by residues R77, R102, and 129 to 137 (DPMLATGGS). Residues I192 and 197–199 (GDA) each bind uracil. Position 198 (D198) interacts with 5-phospho-alpha-D-ribose 1-diphosphate.

This sequence belongs to the UPRTase family. Mg(2+) serves as cofactor.

The enzyme catalyses UMP + diphosphate = 5-phospho-alpha-D-ribose 1-diphosphate + uracil. It participates in pyrimidine metabolism; UMP biosynthesis via salvage pathway; UMP from uracil: step 1/1. With respect to regulation, allosterically activated by GTP. Its function is as follows. Catalyzes the conversion of uracil and 5-phospho-alpha-D-ribose 1-diphosphate (PRPP) to UMP and diphosphate. The polypeptide is Uracil phosphoribosyltransferase (Mycoplasma capricolum subsp. capricolum (strain California kid / ATCC 27343 / NCTC 10154)).